Reading from the N-terminus, the 300-residue chain is Porphobilinogen deaminase (300 aa).

Cysteine 239 bears the S-(dipyrrolylmethanemethyl)cysteine mark.

It belongs to the HMBS family. As to quaternary structure, monomer. The cofactor is dipyrromethane.

It catalyses the reaction 4 porphobilinogen + H2O = hydroxymethylbilane + 4 NH4(+). Its pathway is porphyrin-containing compound metabolism; protoporphyrin-IX biosynthesis; coproporphyrinogen-III from 5-aminolevulinate: step 2/4. Tetrapolymerization of the monopyrrole PBG into the hydroxymethylbilane pre-uroporphyrinogen in several discrete steps. This is Porphobilinogen deaminase from Francisella tularensis subsp. tularensis (strain WY96-3418).